The sequence spans 82 residues: MSFNPELATKTLEAEGLRCPEPVMMVRKTIRNMQDGEVLLVKADDPSTTRDIPSFCRFMDHQLIAAQTEQLPYQYLIKKGLE.

C19 (cysteine persulfide intermediate) is an active-site residue.

Belongs to the sulfur carrier protein TusA family.

It localises to the cytoplasm. Its function is as follows. Sulfur carrier protein which probably makes part of a sulfur-relay system. This chain is Sulfur carrier protein TusA, found in Vibrio parahaemolyticus serotype O3:K6 (strain RIMD 2210633).